We begin with the raw amino-acid sequence, 140 residues long: Ribonuclease P protein subunit p20 (140 aa).

This sequence belongs to the histone-like Alba family. In terms of assembly, component of nuclear RNase P and RNase MRP complexes. RNase P consists of a catalytic RNA moiety and 10 different protein chains; POP1, POP4, POP5, POP7, RPP14, RPP21, RPP25, RPP30, RPP38 and RPP40. Within the RNase P complex, POP1, POP7 and RPP25 form the 'finger' subcomplex, POP5, RPP14, RPP40 and homodimeric RPP30 form the 'palm' subcomplex, and RPP21, POP4 and RPP38 form the 'wrist' subcomplex. All subunits of the RNase P complex interact with the catalytic RNA. Several subunits of RNase P are also part of the RNase MRP complex. RNase MRP consists of a catalytic RNA moiety and about 8 protein subunits; POP1, POP7, RPP25, RPP30, RPP38, RPP40 and possibly also POP4 and POP5. Interacts with SMN1. POP7 forms a heterodimer with RPP25 that binds to the P3 stem loop of the catalytic RNA.

It localises to the nucleus. The protein resides in the nucleolus. Its subcellular location is the cytoplasm. It is found in the cytoplasmic granule. Component of ribonuclease P, a ribonucleoprotein complex that generates mature tRNA molecules by cleaving their 5'-ends. Also a component of the MRP ribonuclease complex, which cleaves pre-rRNA sequences. This Homo sapiens (Human) protein is Ribonuclease P protein subunit p20 (POP7).